The following is a 145-amino-acid chain: uncharacterized protein (145 aa).

The disordered stretch occupies residues M1–S25. Basic and acidic residues predominate over residues P14–S25.

This is an uncharacterized protein from His1 virus (isolate Australia/Victoria) (His1V).